The primary structure comprises 177 residues: Large ribosomal subunit protein uL16 (177 aa).

It belongs to the universal ribosomal protein uL16 family. In terms of assembly, part of the 50S ribosomal subunit. Weakly binds 5S rRNA. Probably binds the A and P site tRNAs.

This is 1 of 5 proteins that mediate the attachment of the 5S rRNA onto the large ribosomal subunit, stabilizing the orientation of adjacent RNA domains. Modeling places the A and P site tRNAs in close proximity to this protein. The chain is Large ribosomal subunit protein uL16 from Haloarcula marismortui (strain ATCC 43049 / DSM 3752 / JCM 8966 / VKM B-1809) (Halobacterium marismortui).